The following is a 113-amino-acid chain: Small ribosomal subunit protein bS6 (113 aa).

The protein belongs to the bacterial ribosomal protein bS6 family.

Functionally, binds together with bS18 to 16S ribosomal RNA. The protein is Small ribosomal subunit protein bS6 of Vesicomyosocius okutanii subsp. Calyptogena okutanii (strain HA).